A 218-amino-acid polypeptide reads, in one-letter code: Glutathione S-transferase-like protein OpS6 (218 aa).

Residues 5–86 (QPIKLYAHKK…YLIEQYDKDG (82 aa)) enclose the GST N-terminal domain. Positions 92-218 (SLQDKSLARA…KIAATKAALA (127 aa)) constitute a GST C-terminal domain.

Belongs to the GST superfamily.

It functions in the pathway secondary metabolite biosynthesis. Glutathione S-transferase-like protein; part of the gene cluster that mediates the biosynthesis of the bibenzoquinone oosporein, a metabolite required for fungal virulence that acts by evading host immunity to facilitate fungal multiplication in insects. The non-reducing polyketide synthase OpS1 produces orsellinic acid by condensing acetyl-CoA with 3 malonyl-CoA units. Orsellinic acid is then hydroxylated to benzenetriol by the hydroxylase OpS4. The intermediate is oxidized either nonenzymatically to 5,5'-dideoxy-oosporein or enzymatically to benzenetetrol by the oxidoreductase OpS7. The latter is further dimerized to oosporein by the catalase OpS5. OpS6 probably functions en route for protecting cells against oxidative stress by scavenging any leaked free radical form of benzenetetrol by activating the thiol group of glutathione. The polypeptide is Glutathione S-transferase-like protein OpS6 (Beauveria bassiana (strain ARSEF 2860) (White muscardine disease fungus)).